Here is a 290-residue protein sequence, read N- to C-terminus: Cell division protein ZipA (290 aa).

A topological domain (periplasmic) is located at residue methionine 1. The helical transmembrane segment at 2 to 22 (DIGLREWLIVIGLIVIAGILF) threads the bilayer. Over 23–290 (DGWRRMRGGK…HERRSLMQKR (268 aa)) the chain is Cytoplasmic. Residues 66-143 (REPSFDEQDL…REKAPSVAAA (78 aa)) are disordered. Residues 81 to 99 (REGKERKGGKRQDEPRQGD) show a composition bias toward basic and acidic residues. The segment covering 100–114 (LDLDEGMALEADPSD) has biased composition (acidic residues).

Belongs to the ZipA family. Interacts with FtsZ via their C-terminal domains.

The protein localises to the cell inner membrane. In terms of biological role, essential cell division protein that stabilizes the FtsZ protofilaments by cross-linking them and that serves as a cytoplasmic membrane anchor for the Z ring. Also required for the recruitment to the septal ring of downstream cell division proteins. This is Cell division protein ZipA from Pseudomonas paraeruginosa (strain DSM 24068 / PA7) (Pseudomonas aeruginosa (strain PA7)).